The primary structure comprises 82 residues: Small ribosomal subunit protein bS18 (82 aa).

This sequence belongs to the bacterial ribosomal protein bS18 family. Part of the 30S ribosomal subunit. Forms a tight heterodimer with protein bS6.

Binds as a heterodimer with protein bS6 to the central domain of the 16S rRNA, where it helps stabilize the platform of the 30S subunit. The protein is Small ribosomal subunit protein bS18 of Sinorhizobium fredii (strain NBRC 101917 / NGR234).